Consider the following 215-residue polypeptide: Elongation factor Ts (215 aa).

Residues 80-83 form an involved in Mg(2+) ion dislocation from EF-Tu region; the sequence is TDFV.

Belongs to the EF-Ts family.

Its subcellular location is the cytoplasm. Associates with the EF-Tu.GDP complex and induces the exchange of GDP to GTP. It remains bound to the aminoacyl-tRNA.EF-Tu.GTP complex up to the GTP hydrolysis stage on the ribosome. The chain is Elongation factor Ts from Alkaliphilus metalliredigens (strain QYMF).